Here is a 1119-residue protein sequence, read N- to C-terminus: Ubiquitin-associated protein 2 (1119 aa).

The disordered stretch occupies residues 1-26; that stretch reads MMTSVSSDHCRGAREKPQISAAQSTQ. A compositionally biased stretch (basic and acidic residues) spans 8-17; that stretch reads DHCRGAREKP. The UBA domain maps to 48-92; that stretch reads KNDSDFEAKVKQLMEVTGKNQDECIVALHDCNGDVNKAINILLEG. The stretch at 105–130 forms a coiled coil; that stretch reads KKKNFAKENSENKENREKKSEKESSR. Basic and acidic residues predominate over residues 110 to 130; it reads AKENSENKENREKKSEKESSR. 7 disordered regions span residues 110–202, 385–476, 622–736, 853–905, 937–966, 982–1020, and 1082–1119; these read AKEN…YSDS, LGQF…SPST, VHNR…SSHQ, RDGS…VNPA, SAKQ…YSTG, GGYA…GSVY, and HLPQ…YWTN. Arg-166 is subject to Omega-N-methylarginine. Residues 168-182 show a composition bias toward basic residues; sequence KRARGRGFGRGRGRG. Residues 389 to 407 show a composition bias toward low complexity; that stretch reads TTTPSTQQNSTSHPTTTTS. Phosphoserine occurs at positions 432, 439, 473, and 630. The segment covering 435–447 has biased composition (low complexity); that stretch reads LSQLSQRQQHQSQ. Residues 651-662 are compositionally biased toward polar residues; the sequence is SQQTLDTPKTTG. Residues 663-678 are compositionally biased toward low complexity; that stretch reads PPSALPSVSSLPSTTS. A compositionally biased stretch (polar residues) spans 679–694; sequence CTALLPSTSQHTGDLT. Composition is skewed to low complexity over residues 695-736 and 874-900; these read SSPL…SSHQ and SASP…AQQP. Over residues 943–957 the composition is skewed to polar residues; it reads VNLSTPTPPFQQASG. Low complexity-rich tracts occupy residues 1002-1011 and 1088-1102; these read GVSVSSSTTG and QSGS…SLQP.

As to quaternary structure, may interact with ANXA2.

Its subcellular location is the nucleus. The protein resides in the chromosome. The protein localises to the cytoplasm. Recruits the ubiquitination machinery to RNA polymerase II for polyubiquitination, removal and degradation, when the transcription-coupled nucleotide excision repair (TC-NER) machinery fails to resolve DNA damage. May promote the degradation of ANXA2. The polypeptide is Ubiquitin-associated protein 2 (Homo sapiens (Human)).